Consider the following 155-residue polypeptide: Ribosome maturation factor RimP (155 aa).

It belongs to the RimP family.

Its subcellular location is the cytoplasm. Functionally, required for maturation of 30S ribosomal subunits. The protein is Ribosome maturation factor RimP of Exiguobacterium sibiricum (strain DSM 17290 / CCUG 55495 / CIP 109462 / JCM 13490 / 255-15).